Here is a 98-residue protein sequence, read N- to C-terminus: NADH-ubiquinone oxidoreductase chain 4L (98 aa).

3 helical membrane-spanning segments follow: residues 1 to 21, 29 to 49, and 61 to 81; these read MSLTYMNMFMAFTISLLGLLM, SLLCLEGMMLSLFVMMTMTIL, and IILLVFAACEAALGLSLLVMV.

It belongs to the complex I subunit 4L family. As to quaternary structure, core subunit of respiratory chain NADH dehydrogenase (Complex I) which is composed of 45 different subunits.

The protein resides in the mitochondrion inner membrane. The enzyme catalyses a ubiquinone + NADH + 5 H(+)(in) = a ubiquinol + NAD(+) + 4 H(+)(out). Functionally, core subunit of the mitochondrial membrane respiratory chain NADH dehydrogenase (Complex I) which catalyzes electron transfer from NADH through the respiratory chain, using ubiquinone as an electron acceptor. Part of the enzyme membrane arm which is embedded in the lipid bilayer and involved in proton translocation. In Stenoderma rufum (Red fruit bat), this protein is NADH-ubiquinone oxidoreductase chain 4L (MT-ND4L).